The chain runs to 385 residues: Acetoin utilization protein AcuC (385 aa).

This sequence belongs to the histone deacetylase family.

It functions in the pathway ketone degradation; acetoin degradation. Its function is as follows. Role in growth on acetoin or butanediol. Involved in the breakdown of these compounds used as a carbon source. The sequence is that of Acetoin utilization protein AcuC (acuC) from Staphylococcus xylosus.